A 161-amino-acid chain; its full sequence is Large ribosomal subunit protein uL15 (161 aa).

Residues 1 to 43 form a disordered region; it reads MKLSDIADNAGARKKRMRVGRGIGSGKGKTSGRGGKGQTARSG. Residues 21–37 show a composition bias toward gly residues; it reads RGIGSGKGKTSGRGGKG.

It belongs to the universal ribosomal protein uL15 family. Part of the 50S ribosomal subunit.

Functionally, binds to the 23S rRNA. The protein is Large ribosomal subunit protein uL15 of Bradyrhizobium sp. (strain BTAi1 / ATCC BAA-1182).